A 625-amino-acid chain; its full sequence is Thrombopoietin receptor (625 aa).

The signal sequence occupies residues 1-25; sequence MPSWALFMVTSCLLLALPNQAQVTS. Over 26 to 482 the chain is Extracellular; sequence QDVFLLALGT…RVSTGSETAW (457 aa). Asn117 carries an N-linked (GlcNAc...) asparagine glycan. 2 consecutive Fibronectin type-III domains span residues 178 to 270 and 383 to 479; these read NATA…PVTV and PTPS…TGSE. Positions 465–469 match the WSXWS motif motif; the sequence is WSAWS. The chain crosses the membrane as a helical span at residues 483-504; that stretch reads ITLVTALLLVLSLSALLGLLLL. Residues 505 to 625 lie on the Cytoplasmic side of the membrane; the sequence is KWQFPAHYRR…YLPLSYWQQP (121 aa). The Box 1 motif motif lies at 519–527; the sequence is LWPSLPDLH. Glycyl lysine isopeptide (Lys-Gly) (interchain with G-Cter in ubiquitin) cross-links involve residues Lys544 and Lys564. Tyr616 and Tyr621 each carry phosphotyrosine.

It belongs to the type I cytokine receptor family. Type 1 subfamily. Homodimer. Interacts with ATXN2L. Interacts with JAK2 and TYK2; these interactions increase MPL localization to the cell membrane. Interacts with THPO. Interacts with SHIP/INPP5D. Interacts with kinases BTK and SYK. Post-translationally, ubiquitination at Lys-544 and Lys-564 targets MPL for degradation by both the lysosomal and proteasomal pathways. The E3 ubiquitin-protein ligase CBL significantly contributes to this ubiquitination.

The protein resides in the cell membrane. The protein localises to the golgi apparatus. It localises to the cell surface. Receptor for thrombopoietin that regulates hematopoietic stem cell renewal, megakaryocyte differentiation, and platelet formation. Upon activation by THPO, induces rapid tyrosine phosphorylation and activation of JAK2, providing docking sites for many signaling proteins such as STAT5, SHIP/INPP5D, GRB2, SOS1 and PI3K. In turn, These signaling cascades lead to the proliferation, survival, and differentiation of megakaryocytes, ultimately leading to increased platelet production. Functionally, acts as an inhibitor of thrombopoietin signaling by promoting protein down-regulation of full-length isoform Mpl-fl. The sequence is that of Thrombopoietin receptor (Mpl) from Mus musculus (Mouse).